The sequence spans 1155 residues: Pesticidal crystal protein Cry1Ab (1155 aa).

This sequence belongs to the delta endotoxin family.

In terms of biological role, promotes colloidosmotic lysis by binding to the midgut epithelial cells of many lepidopteran larvae. In Bacillus thuringiensis subsp. aizawai, this protein is Pesticidal crystal protein Cry1Ab (cry1Ab).